Here is a 249-residue protein sequence, read N- to C-terminus: Basigin (249 aa).

The Ig-like C2-type domain maps to 1–82; sequence AAGTIQTSVN…VGRSNIVVEG (82 aa). At 1 to 187 the chain is on the extracellular side; the sequence is AAGTIQTSVN…MTLRVRSRLA (187 aa). Disulfide bonds link Cys-20-Cys-66 and Cys-105-Cys-165. N-linked (GlcNAc...) asparagine glycans are attached at residues Asn-23, Asn-132, and Asn-166. Positions 84–179 constitute an Ig-like V-type domain; the sequence is PRIKVGKKSE…TQGSVQEIMT (96 aa). A helical transmembrane segment spans residues 188–208; the sequence is ALWPFLGIVAEVLVLVTIIFI. Over 209-249 the chain is Cytoplasmic; that stretch reads YEKRRKPDQTLDEDDPGAAPLKGSGHHMNDKDKNVRQRNAT. The segment at 216 to 249 is disordered; the sequence is DQTLDEDDPGAAPLKGSGHHMNDKDKNVRQRNAT. Phosphothreonine is present on Thr-218. Ser-232 carries the post-translational modification Phosphoserine.

Homooligomer. Interacts with VEGFA, KDR/VEGFR2, PPIA/CYPA, SLC16A12, SLC16A11, ATP1B2, MAG, L1CAM and AJAP1. Interacts with SLC16A3; interaction mediates SLC16A3 targeting to the plasma membrane. Interacts with SLC16A1; interaction mediates SLC16A1 targeting to the plasma membrane. Interacts with PPIL2; regulates BSG transport to the cell membrane. Interacts with XKR8; promoting its localization at the cell membrane. Interacts with SLC16A6; this interaction mediates targeting to the plasma membrane.

It is found in the cell membrane. The protein resides in the endoplasmic reticulum membrane. The protein localises to the basolateral cell membrane. Functionally, signaling receptor for cyclophilins, essential for PPIA/CYPA and PPIB/CYPB-dependent signaling related to chemotaxis and adhesion of immune cells. Plays an important role in targeting the monocarboxylate transporters SLC16A1/GLUT1, SLC16A3, SLC16A8, SLC16A11 and SLC16A12 to the plasma membrane. Acts as a coreceptor for vascular endothelial growth factor receptor 2 (KDR/VEGFR2) in endothelial cells enhancing its VEGFA-mediated activation and downstream signaling. Promotes angiogenesis through EPAS1/HIF2A-mediated up-regulation of VEGFA and KDR/VEGFR2 in endothelial cells. This chain is Basigin (BSG), found in Cricetulus griseus (Chinese hamster).